A 158-amino-acid polypeptide reads, in one-letter code: NADH-quinone oxidoreductase subunit B (158 aa).

4 residues coordinate [4Fe-4S] cluster: Cys-37, Cys-38, Cys-102, and Cys-132.

This sequence belongs to the complex I 20 kDa subunit family. NDH-1 is composed of 14 different subunits. Subunits NuoB, C, D, E, F, and G constitute the peripheral sector of the complex. [4Fe-4S] cluster is required as a cofactor.

The protein resides in the cell inner membrane. The catalysed reaction is a quinone + NADH + 5 H(+)(in) = a quinol + NAD(+) + 4 H(+)(out). NDH-1 shuttles electrons from NADH, via FMN and iron-sulfur (Fe-S) centers, to quinones in the respiratory chain. Couples the redox reaction to proton translocation (for every two electrons transferred, four hydrogen ions are translocated across the cytoplasmic membrane), and thus conserves the redox energy in a proton gradient. This Bordetella avium (strain 197N) protein is NADH-quinone oxidoreductase subunit B.